Here is a 314-residue protein sequence, read N- to C-terminus: Olfactory receptor-like protein I9 (314 aa).

The Extracellular portion of the chain corresponds to 1–25 (MTRRNQTAISQFFLLGLPFPPEYQH). A glycan (N-linked (GlcNAc...) asparagine) is linked at N5. The chain crosses the membrane as a helical span at residues 26-50 (LFYALFLAMYLTTLLGNLIIIILIL). Over 51-57 (LDSHLHT) the chain is Cytoplasmic. Residues 58-79 (PMYLFLSNLSFADLCFSSVTMP) traverse the membrane as a helical segment. Over 80 to 100 (KLLQNMQSQVPSIPYAGCLAQ) the chain is Extracellular. A disulfide bridge links C97 with C189. The helical transmembrane segment at 101–120 (IYFFLFFGDLGNFLLVAMAY) threads the bilayer. The Cytoplasmic segment spans residues 121–139 (DRYVAICFPLHYMSIMSPK). The helical transmembrane segment at 140 to 158 (LCVSLVVLSWVLTTFHAML) threads the bilayer. Over 159–196 (HTLLMARLSFCEDSVIPHYFCDMSTLLKVACSDTHDNE) the chain is Extracellular. Residues 197 to 219 (LAIFILGGPIVVLPFLLIIVSYA) traverse the membrane as a helical segment. The Cytoplasmic portion of the chain corresponds to 220-236 (RIVSSIFKVPSSQSIHK). Residues 237 to 260 (AFSTCGSHLSVVSLFYGTVIGLYL) traverse the membrane as a helical segment. Residues 261–272 (CPSANNSTVKET) lie on the Extracellular side of the membrane. The chain crosses the membrane as a helical span at residues 273 to 292 (VMSLMYTMVTPMLNPFIYSL). At 293 to 314 (RNRDIKDALEKIMCKKQIPSFL) the chain is on the cytoplasmic side.

Belongs to the G-protein coupled receptor 1 family. As to expression, olfactory epithelium.

The protein localises to the cell membrane. Its function is as follows. Odorant receptor. This chain is Olfactory receptor-like protein I9, found in Rattus norvegicus (Rat).